The primary structure comprises 46 residues: Esculentin-1HSa (46 aa).

The cysteines at positions 40 and 46 are disulfide-linked.

In terms of tissue distribution, expressed by the skin glands.

Its subcellular location is the secreted. Functionally, has antibacterial activity against the Gram-positive bacterium S.aureus ATCC 25923 (MIC=12 uM) and the Gram-negative bacterium E.coli ATCC 25726 (MIC=12 uM). The polypeptide is Esculentin-1HSa (Odorrana hosii (Hose's rock frog)).